The following is a 401-amino-acid chain: Argininosuccinate synthase (401 aa).

9–17 (AYSGGLDTS) provides a ligand contact to ATP. Residue tyrosine 88 participates in L-citrulline binding. Glycine 118 is a binding site for ATP. L-aspartate is bound by residues threonine 120, asparagine 124, and aspartate 125. Residue asparagine 124 participates in L-citrulline binding. The L-citrulline site is built by arginine 128, serine 176, serine 185, glutamate 261, and tyrosine 273.

It belongs to the argininosuccinate synthase family. Type 1 subfamily. In terms of assembly, homotetramer.

Its subcellular location is the cytoplasm. It catalyses the reaction L-citrulline + L-aspartate + ATP = 2-(N(omega)-L-arginino)succinate + AMP + diphosphate + H(+). The protein operates within amino-acid biosynthesis; L-arginine biosynthesis; L-arginine from L-ornithine and carbamoyl phosphate: step 2/3. This is Argininosuccinate synthase from Symbiobacterium thermophilum (strain DSM 24528 / JCM 14929 / IAM 14863 / T).